The primary structure comprises 111 residues: MPKIFFLPHKLLLPKGGCFECKEGETILNVALKNNIKLEHACEKSCACSTCHCIIRKGFLSLSGWSEKEEDVLDKAWGLESTSRLSCQAIIGNIDIEVQIPLYNTNYIIEN.

Residues 1-104 enclose the 2Fe-2S ferredoxin-type domain; sequence MPKIFFLPHK…DIEVQIPLYN (104 aa). Residues Cys42, Cys48, Cys51, and Cys87 each contribute to the [2Fe-2S] cluster site.

The protein belongs to the adrenodoxin/putidaredoxin family. [2Fe-2S] cluster serves as cofactor.

Ferredoxin are iron-sulfur proteins that transfer electrons in a wide variety of metabolic reactions. The polypeptide is 2Fe-2S ferredoxin (fdx) (Buchnera aphidicola subsp. Schizaphis graminum (strain Sg)).